Consider the following 405-residue polypeptide: Probable tRNA sulfurtransferase (405 aa).

The region spanning 60–165 is the THUMP domain; sequence QEVSASLKKI…PDAAYISHEE (106 aa). ATP is bound by residues 183–184, 208–209, R265, G287, and Q296; these read ML and HF.

It belongs to the ThiI family.

It is found in the cytoplasm. It carries out the reaction [ThiI sulfur-carrier protein]-S-sulfanyl-L-cysteine + a uridine in tRNA + 2 reduced [2Fe-2S]-[ferredoxin] + ATP + H(+) = [ThiI sulfur-carrier protein]-L-cysteine + a 4-thiouridine in tRNA + 2 oxidized [2Fe-2S]-[ferredoxin] + AMP + diphosphate. The enzyme catalyses [ThiS sulfur-carrier protein]-C-terminal Gly-Gly-AMP + S-sulfanyl-L-cysteinyl-[cysteine desulfurase] + AH2 = [ThiS sulfur-carrier protein]-C-terminal-Gly-aminoethanethioate + L-cysteinyl-[cysteine desulfurase] + A + AMP + 2 H(+). The protein operates within cofactor biosynthesis; thiamine diphosphate biosynthesis. Its function is as follows. Catalyzes the ATP-dependent transfer of a sulfur to tRNA to produce 4-thiouridine in position 8 of tRNAs, which functions as a near-UV photosensor. Also catalyzes the transfer of sulfur to the sulfur carrier protein ThiS, forming ThiS-thiocarboxylate. This is a step in the synthesis of thiazole, in the thiamine biosynthesis pathway. The sulfur is donated as persulfide by IscS. The sequence is that of Probable tRNA sulfurtransferase from Streptococcus suis (strain 98HAH33).